A 67-amino-acid chain; its full sequence is Large ribosomal subunit protein bL32c (67 aa).

Belongs to the bacterial ribosomal protein bL32 family.

The protein localises to the plastid. The protein resides in the chloroplast. The sequence is that of Large ribosomal subunit protein bL32c from Chara vulgaris (Common stonewort).